Here is a 241-residue protein sequence, read N- to C-terminus: 2-C-methyl-D-erythritol 4-phosphate cytidylyltransferase (241 aa).

It belongs to the IspD/TarI cytidylyltransferase family. IspD subfamily.

The catalysed reaction is 2-C-methyl-D-erythritol 4-phosphate + CTP + H(+) = 4-CDP-2-C-methyl-D-erythritol + diphosphate. The protein operates within isoprenoid biosynthesis; isopentenyl diphosphate biosynthesis via DXP pathway; isopentenyl diphosphate from 1-deoxy-D-xylulose 5-phosphate: step 2/6. Its function is as follows. Catalyzes the formation of 4-diphosphocytidyl-2-C-methyl-D-erythritol from CTP and 2-C-methyl-D-erythritol 4-phosphate (MEP). The polypeptide is 2-C-methyl-D-erythritol 4-phosphate cytidylyltransferase (Alkaliphilus metalliredigens (strain QYMF)).